A 71-amino-acid chain; its full sequence is Large ribosomal subunit protein uL29 (71 aa).

Belongs to the universal ribosomal protein uL29 family.

This is Large ribosomal subunit protein uL29 from Rickettsia africae (strain ESF-5).